Here is a 529-residue protein sequence, read N- to C-terminus: Cytochrome P450 monooxygenase atmQ (529 aa).

Helical transmembrane passes span 22-42 (YPFA…QQLA) and 51-71 (SWVN…IAAF). Position 467 (C467) interacts with heme.

This sequence belongs to the cytochrome P450 family. Heme is required as a cofactor.

It is found in the membrane. It functions in the pathway secondary metabolite biosynthesis. Cytochrome P450 monooxygenase; part of the ATM2 gene cluster that mediates the biosynthesis of aflatrem, a tremorgenic mycotoxin with acute neurotoxic effects. Synthesis of geranylgeranyl diphosphate (GGPP) by AtmG (a GGPP synthase) precedes condensation of GGPP with indole 3-glycerol phosphate, followed by epoxidation and cyclization by AtmM (a FAD-dependent monooxygenase) and AtmC (a prenyltransferase) to produce paspaline. AtmB is also essential for paspaline production, but its exact role has not been identified yet. AtmP, a cytochrome P450 monooxygenase, subsequently converts paspaline to 13-desoxypaxilline via PC-M6 by removal of the C-30 methyl group and oxidation at C-10. AtmQ, a cytochrome P450 monooxygenase, then catalyzes the oxidation of 13-desoxypaxilline, first at C-7 to produce paspalicine and then at C-13 to form paspalinine. Finally, AtmD prenylates paspalinine to form aflatrem. The protein is Cytochrome P450 monooxygenase atmQ of Aspergillus flavus.